The sequence spans 67 residues: DNA-directed RNA polymerase subunit omega (67 aa).

The protein belongs to the RNA polymerase subunit omega family. In terms of assembly, the RNAP catalytic core consists of 2 alpha, 1 beta, 1 beta' and 1 omega subunit. When a sigma factor is associated with the core the holoenzyme is formed, which can initiate transcription.

The enzyme catalyses RNA(n) + a ribonucleoside 5'-triphosphate = RNA(n+1) + diphosphate. Functionally, promotes RNA polymerase assembly. Latches the N- and C-terminal regions of the beta' subunit thereby facilitating its interaction with the beta and alpha subunits. The chain is DNA-directed RNA polymerase subunit omega from Listeria innocua serovar 6a (strain ATCC BAA-680 / CLIP 11262).